The following is a 202-amino-acid chain: MEAFTVHKGIGVPLRRSNVDTDQIIPAVYLKRVTRTGFEDALFAAWRSDPDFILNTEPFNRGTVLVAGPDFGTGSSREHAVWALSDYGFRVVISSRFADIFRGNAGKGGLLAAQMSQNDVEMLWKMIEEQPGLELVVDLRDRTVTAGTVVLPFDIDDYTRWRLLEGLDDIGLTLRRSDVIAEFEKARPTWKPTTLPAPISQA.

The protein belongs to the LeuD family. LeuD type 1 subfamily. In terms of assembly, heterodimer of LeuC and LeuD.

The catalysed reaction is (2R,3S)-3-isopropylmalate = (2S)-2-isopropylmalate. It functions in the pathway amino-acid biosynthesis; L-leucine biosynthesis; L-leucine from 3-methyl-2-oxobutanoate: step 2/4. In terms of biological role, catalyzes the isomerization between 2-isopropylmalate and 3-isopropylmalate, via the formation of 2-isopropylmaleate. This chain is 3-isopropylmalate dehydratase small subunit, found in Nocardia farcinica (strain IFM 10152).